The following is a 639-amino-acid chain: Mediator of RNA polymerase II transcription subunit 17 (639 aa).

A compositionally biased stretch (polar residues) spans 32–43; the sequence is ASATVTTNGTTA. Disordered stretches follow at residues 32–68 and 130–159; these read ASATVTTNGTTADSSEDSGSQQSVSSAPIQQNSEEHS and MGDADEESDLKPQEITDDDSNARLKPNNDS. The segment covering 48–57 has biased composition (low complexity); sequence DSGSQQSVSS. A compositionally biased stretch (polar residues) spans 58–68; the sequence is APIQQNSEEHS. Residues 245–271 adopt a coiled-coil conformation; it reads WKLRSLEDSKALLKENYAKLQKSLEVE.

Belongs to the Mediator complex subunit 17 family. Component of the Mediator complex.

Its subcellular location is the nucleus. Functionally, component of the Mediator complex, a coactivator involved in the regulated transcription of nearly all RNA polymerase II-dependent genes. Mediator functions as a bridge to convey information from gene-specific regulatory proteins to the basal RNA polymerase II transcription machinery. Mediator is recruited to promoters by direct interactions with regulatory proteins and serves as a scaffold for the assembly of a functional preinitiation complex with RNA polymerase II and the general transcription factors. This chain is Mediator of RNA polymerase II transcription subunit 17 (SRB4), found in Eremothecium gossypii (strain ATCC 10895 / CBS 109.51 / FGSC 9923 / NRRL Y-1056) (Yeast).